The sequence spans 194 residues: Thymidine kinase (194 aa).

ATP contacts are provided by residues 15 to 22 (GSMFSGKS) and 88 to 91 (DEVQ). Catalysis depends on Glu-89, which acts as the Proton acceptor. Residues Cys-145, Cys-148, Cys-183, and His-186 each coordinate Zn(2+).

This sequence belongs to the thymidine kinase family. In terms of assembly, homotetramer.

Its subcellular location is the cytoplasm. It catalyses the reaction thymidine + ATP = dTMP + ADP + H(+). The protein is Thymidine kinase of Bacillus velezensis (strain DSM 23117 / BGSC 10A6 / LMG 26770 / FZB42) (Bacillus amyloliquefaciens subsp. plantarum).